A 360-amino-acid chain; its full sequence is Peptide chain release factor 1 (360 aa).

Residue glutamine 237 is modified to N5-methylglutamine.

It belongs to the prokaryotic/mitochondrial release factor family. Post-translationally, methylated by PrmC. Methylation increases the termination efficiency of RF1.

It localises to the cytoplasm. Its function is as follows. Peptide chain release factor 1 directs the termination of translation in response to the peptide chain termination codons UAG and UAA. This chain is Peptide chain release factor 1, found in Pseudomonas putida (strain W619).